Reading from the N-terminus, the 376-residue chain is Aminomethyltransferase (376 aa).

It belongs to the GcvT family. As to quaternary structure, the glycine cleavage system is composed of four proteins: P, T, L and H.

The catalysed reaction is N(6)-[(R)-S(8)-aminomethyldihydrolipoyl]-L-lysyl-[protein] + (6S)-5,6,7,8-tetrahydrofolate = N(6)-[(R)-dihydrolipoyl]-L-lysyl-[protein] + (6R)-5,10-methylene-5,6,7,8-tetrahydrofolate + NH4(+). In terms of biological role, the glycine cleavage system catalyzes the degradation of glycine. The protein is Aminomethyltransferase of Nostoc sp. (strain PCC 7120 / SAG 25.82 / UTEX 2576).